The primary structure comprises 1325 residues: RIMS-binding protein 2 (1325 aa).

The segment at threonine 153–lysine 181 is disordered. The segment covering serine 158–serine 169 has biased composition (basic and acidic residues). In terms of domain architecture, SH3 1 spans glycine 186–aspartate 253. Fibronectin type-III domains lie at valine 315–valine 408, alanine 411–alanine 493, and proline 507–serine 608. Disordered stretches follow at residues serine 601–leucine 778, aspartate 988–glutamate 1010, and alanine 1040–methionine 1090. The span at glutamate 627 to glutamate 641 shows a compositional bias: basic and acidic residues. The span at phenylalanine 664–proline 676 shows a compositional bias: polar residues. Positions methionine 696–phenylalanine 716 are enriched in basic and acidic residues. Positions serine 717–asparagine 727 are enriched in polar residues. Composition is skewed to basic and acidic residues over residues cysteine 763 to arginine 774 and proline 996 to glutamate 1010. SH3 domains lie at isoleucine 1121–alanine 1189 and valine 1225–aspartate 1292.

It belongs to the RIMBP family. Interacts with RIMS1, RIMS2, CACNA1D and CACNA1B, and potentially with other Ca(2+) channel alpha-1 isoforms. Brain, cochlea and retina.

Its subcellular location is the cell membrane. The protein localises to the synapse. Functionally, plays a role in the synaptic transmission as bifunctional linker that interacts simultaneously with RIMS1, RIMS2, CACNA1D and CACNA1B. The polypeptide is RIMS-binding protein 2 (RIMBP2) (Gallus gallus (Chicken)).